The following is a 138-amino-acid chain: uncharacterized protein (138 aa).

The disordered stretch occupies residues 1-73; the sequence is MCSAGQLLGG…NHTGEPVGDD (73 aa). A compositionally biased stretch (gly residues) spans 7–18; the sequence is LLGGGGGGGGSG. Residues 19 to 29 show a composition bias toward basic and acidic residues; it reads GERDEDRDALA. Residues 30–43 show a composition bias toward low complexity; sequence ERAAAGTEQESGAS. A helical membrane pass occupies residues 106–126; that stretch reads VIVIFFWVMLWFLGLPAFGLV.

This sequence belongs to the FAM241 family.

It is found in the membrane. This is an uncharacterized protein from Bos taurus (Bovine).